A 109-amino-acid polypeptide reads, in one-letter code: Large ribosomal subunit protein eL30 (109 aa).

This sequence belongs to the eukaryotic ribosomal protein eL30 family.

This chain is Large ribosomal subunit protein eL30 (RPL30), found in Yarrowia lipolytica (strain CLIB 122 / E 150) (Yeast).